The primary structure comprises 150 residues: Large ribosomal subunit protein uL15 (150 aa).

A disordered region spans residues M1–E52. The span at G23 to A32 shows a compositional bias: gly residues.

It belongs to the universal ribosomal protein uL15 family. Part of the 50S ribosomal subunit.

In terms of biological role, binds to the 23S rRNA. The chain is Large ribosomal subunit protein uL15 from Christiangramia forsetii (strain DSM 17595 / CGMCC 1.15422 / KT0803) (Gramella forsetii).